The primary structure comprises 310 residues: ADP-L-glycero-D-manno-heptose-6-epimerase (310 aa).

NADP(+) contacts are provided by residues 10-11 (FI), 31-32 (DN), K38, K53, 75-79 (EGACS), and N92. Y140 (proton acceptor) is an active-site residue. Residue K144 participates in NADP(+) binding. N169 provides a ligand contact to substrate. V170 and K178 together coordinate NADP(+). Residue K178 is the Proton acceptor of the active site. Residues S180, H187, 201–204 (FEGS), R209, and Y272 contribute to the substrate site.

This sequence belongs to the NAD(P)-dependent epimerase/dehydratase family. HldD subfamily. In terms of assembly, homopentamer. Requires NADP(+) as cofactor.

It catalyses the reaction ADP-D-glycero-beta-D-manno-heptose = ADP-L-glycero-beta-D-manno-heptose. It participates in nucleotide-sugar biosynthesis; ADP-L-glycero-beta-D-manno-heptose biosynthesis; ADP-L-glycero-beta-D-manno-heptose from D-glycero-beta-D-manno-heptose 7-phosphate: step 4/4. Catalyzes the interconversion between ADP-D-glycero-beta-D-manno-heptose and ADP-L-glycero-beta-D-manno-heptose via an epimerization at carbon 6 of the heptose. The protein is ADP-L-glycero-D-manno-heptose-6-epimerase of Citrobacter koseri (strain ATCC BAA-895 / CDC 4225-83 / SGSC4696).